The primary structure comprises 85 residues: Putative N.vectensis toxin 1 9 (85 aa).

Positions 1–20 are cleaved as a signal peptide; the sequence is MASFKIVIVCLALLVAVASA. Positions 21 to 36 are excised as a propeptide; it reads RRRDMMSDDELDYHFS. Disulfide bonds link cysteine 42/cysteine 82, cysteine 44/cysteine 72, and cysteine 65/cysteine 83.

The protein belongs to the sea anemone sodium channel inhibitory toxin family. Type II subfamily. As to expression, expressed in ectodermal glands and in clumps outside of the extodermal layer. Is not expressed in nematocytes. In adult female tissues, shows similar expression levels in mesenteries (gametes-producing tissue), tentacles, pharynx and physa.

It localises to the secreted. Its function is as follows. Binds to site 3 of voltage-gated sodium channels and inhibits the inactivation process. Is highly active on DmNav1/TipE (drosophila) and is only extremely weakly active on rat Nav1.4-beta-1/SCN4A-SCN1B, and on human Nav1.5-beta-1/SCN5A-beta-1. This reveals high specificity for arthropod over mammalian channels. In vivo, when released into the medium, this recombinant toxin induces impaired swimming, paralysis and death of the crustacean A.nauplii within several hours. Also causes paralysis of cherry shrimps immediately after injection at very low doses. Its effect on zebrafish (D.rerio) larvae is also rapid, since it induces tail twitching accompanied by impaired swimming after 20 minutes and complete paralysis within 45 minutes. It has also been observed to cause death of zebrafish larvae within 1 hour. The polypeptide is Putative N.vectensis toxin 1 9 (Nematostella vectensis (Starlet sea anemone)).